The sequence spans 119 residues: Protein TusC (119 aa).

It belongs to the DsrF/TusC family. As to quaternary structure, heterohexamer, formed by a dimer of trimers. The hexameric TusBCD complex contains 2 copies each of TusB, TusC and TusD. The TusBCD complex interacts with TusE.

The protein resides in the cytoplasm. Its function is as follows. Part of a sulfur-relay system required for 2-thiolation of 5-methylaminomethyl-2-thiouridine (mnm(5)s(2)U) at tRNA wobble positions. This Escherichia coli O8 (strain IAI1) protein is Protein TusC.